Reading from the N-terminus, the 230-residue chain is Triosephosphate isomerase (230 aa).

9 to 11 (NYK) contributes to the substrate binding site. His93 acts as the Electrophile in catalysis. Glu141 acts as the Proton acceptor in catalysis. Substrate contacts are provided by residues Ile146, Gly180, and 201–202 (AS).

It belongs to the triosephosphate isomerase family. In terms of assembly, homotetramer; dimer of dimers.

Its subcellular location is the cytoplasm. The catalysed reaction is D-glyceraldehyde 3-phosphate = dihydroxyacetone phosphate. It participates in carbohydrate biosynthesis; gluconeogenesis. It functions in the pathway carbohydrate degradation; glycolysis; D-glyceraldehyde 3-phosphate from glycerone phosphate: step 1/1. Its function is as follows. Involved in the gluconeogenesis. Catalyzes stereospecifically the conversion of dihydroxyacetone phosphate (DHAP) to D-glyceraldehyde-3-phosphate (G3P). This Sulfolobus acidocaldarius (strain ATCC 33909 / DSM 639 / JCM 8929 / NBRC 15157 / NCIMB 11770) protein is Triosephosphate isomerase.